Reading from the N-terminus, the 562-residue chain is Glycine betaine/proline/choline/ectoine transporter VP1456 (562 aa).

The next 12 helical transmembrane spans lie at 68 to 88, 110 to 130, 147 to 167, 203 to 223, 243 to 263, 287 to 307, 322 to 342, 373 to 393, 404 to 424, 456 to 476, 503 to 523, and 531 to 551; these read PVFG…LLVE, FFMW…FSPL, VSWL…FWSV, WGVH…FFAF, AWGW…LFGL, GIGT…LSVV, MIVA…TAMG, WTVF…MFIA, FLFA…SVFG, VLPY…VFFI, IFWA…GGKE, and GVVA…VSLV.

The protein belongs to the BCCT transporter (TC 2.A.15) family.

It localises to the cell inner membrane. In terms of biological role, involved in the uptake of osmoprotectants. Can transport glycine betaine, proline, choline and ectoine. The polypeptide is Glycine betaine/proline/choline/ectoine transporter VP1456 (Vibrio parahaemolyticus serotype O3:K6 (strain RIMD 2210633)).